A 430-amino-acid polypeptide reads, in one-letter code: Tol-Pal system protein TolB (430 aa).

Residues 1-21 (MKQALRVAFGFLILWASVLHA) form the signal peptide.

It belongs to the TolB family. The Tol-Pal system is composed of five core proteins: the inner membrane proteins TolA, TolQ and TolR, the periplasmic protein TolB and the outer membrane protein Pal. They form a network linking the inner and outer membranes and the peptidoglycan layer.

The protein localises to the periplasm. Its function is as follows. Part of the Tol-Pal system, which plays a role in outer membrane invagination during cell division and is important for maintaining outer membrane integrity. TolB occupies a key intermediary position in the Tol-Pal system because it communicates directly with both membrane-embedded components, Pal in the outer membrane and TolA in the inner membrane. The protein is Tol-Pal system protein TolB of Escherichia coli O139:H28 (strain E24377A / ETEC).